We begin with the raw amino-acid sequence, 470 residues long: Cysteine--tRNA ligase (470 aa).

Position 28 (cysteine 28) interacts with Zn(2+). Positions 30-40 (PTVYNYIHIGN) match the 'HIGH' region motif. Zn(2+)-binding residues include cysteine 212, histidine 237, and glutamate 241. Residues 271-275 (KMSKS) carry the 'KMSKS' region motif. Lysine 274 lines the ATP pocket.

It belongs to the class-I aminoacyl-tRNA synthetase family. As to quaternary structure, monomer. Requires Zn(2+) as cofactor.

It is found in the cytoplasm. It carries out the reaction tRNA(Cys) + L-cysteine + ATP = L-cysteinyl-tRNA(Cys) + AMP + diphosphate. This is Cysteine--tRNA ligase from Ligilactobacillus salivarius (strain UCC118) (Lactobacillus salivarius).